We begin with the raw amino-acid sequence, 383 residues long: S-adenosylmethionine synthase (383 aa).

Residue histidine 15 coordinates ATP. Aspartate 17 contributes to the Mg(2+) binding site. Glutamate 43 contacts K(+). L-methionine is bound by residues glutamate 56 and glutamine 99. The segment at 99–109 (QSPDINQGVDR) is flexible loop. ATP is bound by residues 164–166 (DAK), 230–231 (RF), aspartate 239, 245–246 (RK), alanine 262, and lysine 266. Aspartate 239 serves as a coordination point for L-methionine. Residue lysine 270 participates in L-methionine binding.

This sequence belongs to the AdoMet synthase family. In terms of assembly, homotetramer; dimer of dimers. The cofactor is Mg(2+). K(+) is required as a cofactor.

It localises to the cytoplasm. The enzyme catalyses L-methionine + ATP + H2O = S-adenosyl-L-methionine + phosphate + diphosphate. The protein operates within amino-acid biosynthesis; S-adenosyl-L-methionine biosynthesis; S-adenosyl-L-methionine from L-methionine: step 1/1. Functionally, catalyzes the formation of S-adenosylmethionine (AdoMet) from methionine and ATP. The overall synthetic reaction is composed of two sequential steps, AdoMet formation and the subsequent tripolyphosphate hydrolysis which occurs prior to release of AdoMet from the enzyme. In Shewanella loihica (strain ATCC BAA-1088 / PV-4), this protein is S-adenosylmethionine synthase.